We begin with the raw amino-acid sequence, 587 residues long: Complement component C8 beta chain (587 aa).

A signal peptide spans 1-31; sequence MNHKLKPTVGLGYCLLCAALCLLLLRDVAIA. Residues 32–44 constitute a propeptide that is removed on maturation; sequence GSGEEPSGVREAR. The 56-residue stretch at 56-111 folds into the TSP type-1 1 domain; that stretch reads DCVQSEWSSWTRCDVCRKKRYRYAKLVQPSQFGGEPCHVQGKEVEPCSPPSRYDCT. Cystine bridges form between cysteine 57–cysteine 92, cysteine 68–cysteine 102, cysteine 71–cysteine 110, cysteine 118–cysteine 129, and cysteine 123–cysteine 142. 2 C-linked (Man) tryptophan glycosylation sites follow: tryptophan 62 and tryptophan 65. One can recognise an LDL-receptor class A domain in the interval 117-159; the sequence is LCEGFLCTYTGRCVPIDLRCNGDDDCGDWSAEKGSPKVPKACK. Ca(2+) is bound by residues leucine 134, asparagine 137, aspartate 139, aspartate 141, and glutamate 148. Positions 154–500 constitute an MACPF domain; the sequence is VPKACKQEAQ…EYLEESSSCR (347 aa). Cysteine 158 and cysteine 196 are joined by a disulfide. A run of 4 beta stranded transmembrane segments spans residues 248-255, 258-265, 375-382, and 388-395; these read TTVSIGFA, GVAEFGFN, EQIVLKVG, and VYVTVGLE. 5 disulfide bridges follow: cysteine 374-cysteine 399, cysteine 499-cysteine 546, cysteine 501-cysteine 517, cysteine 504-cysteine 519, and cysteine 521-cysteine 530. The region spanning 501 to 531 is the EGF-like domain; the sequence is CAPCRNNGLAVLKGTRCECVCPSGYSGLGCE. A TSP type-1 2 domain is found at 541 to 587; sequence DGSWSCWGSWSPCRGRSKTRSRQCNNPAPSSGGIACRGLQMETTDCF. Residues tryptophan 547 and tryptophan 550 are each glycosylated (C-linked (Man) tryptophan). Residues cysteine 553 and cysteine 586 are joined by a disulfide bond.

It belongs to the complement C6/C7/C8/C9 family. As to quaternary structure, heterotrimer of 3 chains: alpha (C8A), beta (C8B) and gamma (C8G); the alpha and gamma chains are disulfide bonded. Component of the membrane attack complex (MAC), composed of complement C5b, C6, C7, C8A, C8B, C8G and multiple copies of the pore-forming subunit C9.

It is found in the secreted. The protein localises to the target cell membrane. Component of the membrane attack complex (MAC), a multiprotein complex activated by the complement cascade, which inserts into a target cell membrane and forms a pore, leading to target cell membrane rupture and cell lysis. The MAC is initiated by proteolytic cleavage of C5 into complement C5b in response to the classical, alternative, lectin and GZMK complement pathways. The complement pathways consist in a cascade of proteins that leads to phagocytosis and breakdown of pathogens and signaling that strengthens the adaptive immune system. C8B, together with C8A and C8G, inserts into the target membrane, but does not form pores by itself. During MAC assembly, associates with C5b, C6 and C7 to form the C5b8 intermediate complex that inserts into the target membrane and traverses the bilayer increasing membrane rigidity. This Oncorhynchus mykiss (Rainbow trout) protein is Complement component C8 beta chain (c8b).